The following is a 460-amino-acid chain: Mogroside I-E synthase (460 aa).

The active-site Proton acceptor is the H25. D114 serves as the catalytic Charge relay. UDP-alpha-D-glucose is bound by residues S286, C339, Q341, W359, N360, S361, E364, D380, and Q381.

The protein belongs to the UDP-glycosyltransferase family. Highly expressed in young fruits 15 days after anthesis (15-DAA).

The enzyme catalyses mogrol + UDP-alpha-D-glucose = mogroside IE + UDP + H(+). The catalysed reaction is mogroside I-A1 + UDP-alpha-D-glucose = mogroside IIE + UDP + H(+). It catalyses the reaction mogroside II-A1 + UDP-alpha-D-glucose = mogroside IIIX + UDP + H(+). It carries out the reaction mogroside II-A + UDP-alpha-D-glucose = mogroside III + UDP + H(+). The enzyme catalyses mogroside III-A1 + UDP-alpha-D-glucose = siamenoside I + UDP + H(+). Its pathway is secondary metabolite biosynthesis; terpenoid biosynthesis. In terms of biological role, UDP-glycosyltransferase involved in the biosynthesis of cucurbitacin and mogroside tetracyclic triterpene natural products (e.g. siamenoside I and mogrosides IV, V and VI). Cucurbitacins have cytotoxic properties and exhibit deterrent taste as a defense barrier against herbivores. Mogrosides are nonsugar highly oxygenated compounds used as high-intensity zero-calorie sweeteners; they also possess pharmacological properties such as regulating immunity, lowering blood sugar and lipid levels, protecting the liver, and acting as antioxidants and antitumor agents. Catalyzes the C3 primary glucosylation of mogrol, mogroside I-A1, mogroside II-A1, mogroside II-A and mogroside III-A1. The chain is Mogroside I-E synthase from Siraitia grosvenorii (Monk's fruit).